A 312-amino-acid chain; its full sequence is Probable splicing factor, arginine/serine-rich 1 (312 aa).

The 71-residue stretch at 3-73 (ARIYIGRLTS…ERVILDYSKP (71 aa)) folds into the RRM 1 domain. 2 disordered regions span residues 69–125 (DYSK…GRPY) and 196–312 (KMID…DGDN). The segment covering 74–90 (RGGGGDRGGFGGGGRGG) has biased composition (gly residues). The segment covering 103–121 (GRDRFDRYDRGPPRRESRY) has biased composition (basic and acidic residues). The region spanning 129-202 (HRVVVENLSS…RKIKMIDDSQ (74 aa)) is the RRM 2 domain. A compositionally biased stretch (basic residues) spans 206–259 (SRSRSNSRSRSRSRSRDRRRSRSRSSSRSKSRSRSPPKRSRRESKSKSRSRSRS).

This sequence belongs to the splicing factor SR family. In terms of processing, extensively phosphorylated on serine residues in the RS domain.

The protein localises to the nucleus. In terms of biological role, plays a functionally redundant role in spermatogenesis and growth rate control. The sequence is that of Probable splicing factor, arginine/serine-rich 1 (rsp-1) from Caenorhabditis elegans.